The primary structure comprises 223 residues: Small ribosomal subunit protein uS3 (223 aa).

The KH type-2 domain occupies Ile39–Ala117.

It belongs to the universal ribosomal protein uS3 family. Part of the 30S ribosomal subunit. Forms a tight complex with proteins S10 and S14.

Binds the lower part of the 30S subunit head. Binds mRNA in the 70S ribosome, positioning it for translation. The sequence is that of Small ribosomal subunit protein uS3 from Chlamydia abortus (strain DSM 27085 / S26/3) (Chlamydophila abortus).